A 384-amino-acid polypeptide reads, in one-letter code: FAD-dependent urate hydroxylase (384 aa).

FAD contacts are provided by residues Gly11, 30–31 (EA), Ser43, and Val125. Substrate contacts are provided by residues Asn178, Arg204, and 216-218 (YFF). FAD-binding positions include Asp285 and 295–299 (GQGGC).

Belongs to the FAD-dependent urate hydroxylase family. Requires FAD as cofactor.

It catalyses the reaction urate + NADH + O2 + H(+) = 5-hydroxyisourate + NAD(+) + H2O. The protein operates within purine metabolism; urate degradation. Its function is as follows. Catalyzes the hydroxylation of uric acid to 5-hydroxyisourate. This Klebsiella pneumoniae protein is FAD-dependent urate hydroxylase (hpxO).